The sequence spans 341 residues: Geranylfarnesyl diphosphate synthase (341 aa).

Positions 47, 50, and 95 each coordinate isopentenyl diphosphate. Asp102 and Asp106 together coordinate Mg(2+). Position 111 (Arg111) interacts with an all-trans-polyprenyl diphosphate. Position 112 (Arg112) interacts with isopentenyl diphosphate. Positions 193, 194, and 231 each coordinate an all-trans-polyprenyl diphosphate.

It belongs to the FPP/GGPP synthase family. As to quaternary structure, homodimer. The cofactor is Mg(2+).

The protein resides in the cytoplasm. It catalyses the reaction isopentenyl diphosphate + (2E,6E,10E)-geranylgeranyl diphosphate = (2E,6E,10E,14E)-geranylfarnesyl diphosphate + diphosphate. In terms of biological role, probably involved in biosynthesis of the precursor for C25 (sesterterpanyl chain) moiety of C20-C25 diether (2-O-sesterterpanyl-3-O-phytanyl-sn-glycer) membrane lipid. Catalyzes the condensation of isopentenyl pyrophosphate with the allylic pyrophosphates to yield geranylfarnesyl diphosphate (GFPP). Geranylgeranyl diphosphate (GGPP) is the preferred substrate, but dimethylallyl diphosphate (DMAPP) and farnesyl diphosphate (FPP) can also be used as allylic substrate. The polypeptide is Geranylfarnesyl diphosphate synthase (idsA3) (Natronomonas pharaonis (strain ATCC 35678 / DSM 2160 / CIP 103997 / JCM 8858 / NBRC 14720 / NCIMB 2260 / Gabara) (Halobacterium pharaonis)).